A 205-amino-acid chain; its full sequence is Dr1-associated corepressor (205 aa).

The Histone-fold domain occupies 14–77 (PARIKKIMQT…SHLKQCIELE (64 aa)). Positions 91–205 (PDMQGDGEDN…DEEDEEDYDS (115 aa)) are disordered. Basic and acidic residues predominate over residues 98 to 108 (EDNHMDGDKGA). Over residues 114–125 (PGSGGRKNGGMG) the composition is skewed to gly residues. Positions 138–155 (SEQEDESEDTDTDGEEET) are enriched in acidic residues. Residues 184 to 193 (PLPPAPPGPS) are compositionally biased toward pro residues. The segment covering 195-205 (PDEEDEEDYDS) has biased composition (acidic residues).

This sequence belongs to the NC2 alpha/DRAP1 family. In terms of assembly, heterodimer with DR1. Binds BTAF1. In terms of processing, phosphorylation reduces DNA binding, but has no effect on heterodimerization and TBP binding. Ubiquitous. Highly expressed in adult testis, heart, skeletal muscle, pancreas and brain, and in fetal brain, liver and kidney.

The protein resides in the nucleus. Functionally, the association of the DR1/DRAP1 heterodimer with TBP results in a functional repression of both activated and basal transcription of class II genes. This interaction precludes the formation of a transcription-competent complex by inhibiting the association of TFIIA and/or TFIIB with TBP. Can bind to DNA on its own. The chain is Dr1-associated corepressor (DRAP1) from Homo sapiens (Human).